We begin with the raw amino-acid sequence, 345 residues long: Probable aldo-keto reductase 3 (345 aa).

Y63 functions as the Proton donor in the catalytic mechanism. H130 contributes to the substrate binding site. NADP(+) is bound at residue 209 to 219 (SPLGRGFFASG).

Belongs to the aldo/keto reductase family.

In Arabidopsis thaliana (Mouse-ear cress), this protein is Probable aldo-keto reductase 3.